The primary structure comprises 346 residues: MQASMLDSQWRLTIFSPRRKVKVSQMNSRFIAVLLTATILPWVAQAQDSYPSSPVTIMVPAAAGGPSDTVARLVAQSMSKTLGQQVLVENMGGAGGSLGAANVAKADPDGYRLLLYHIGVATFAALYPNLAYKPIEDFSSVGLITEVPMTIVGRKDLEPKTFADLVAIVKKNATTVTFGTAGTGAVSDLCGRLLQDALGTKITLVPYKGMGPAMTDLIGGRIDLACDQTTNTTTQIKANEVHAYAVTTKARIDVLPDVPTVDEGGLKDFELSAWHALWAPKDTPAPIREKLSEALKTALKDPMVIERFASLGTVPVAQDMATPAALDQKFKAEVERLAKVISEAGK.

Positions 1–46 (MQASMLDSQWRLTIFSPRRKVKVSQMNSRFIAVLLTATILPWVAQA) are cleaved as a signal peptide.

This sequence belongs to the UPF0065 (bug) family.

The protein resides in the periplasm. This Agrobacterium vitis (Rhizobium vitis) protein is UPF0065 protein in the TAR-I ttuE-ttuC' intergenic region.